The chain runs to 343 residues: D-alanine--D-alanine ligase (343 aa).

The 207-residue stretch at 129–335 folds into the ATP-grasp domain; sequence KYVLENFGVK…YGELISEIIE (207 aa). Position 162 to 217 (162 to 217) interacts with ATP; it reads ENKLGYDVFIKPSNSGSSVGISKAHNREELEAGLEEALKFDRKVLVEVALNAREIE. Positions 288, 302, and 304 each coordinate Mg(2+).

Belongs to the D-alanine--D-alanine ligase family. Mg(2+) is required as a cofactor. Mn(2+) serves as cofactor.

It is found in the cytoplasm. The catalysed reaction is 2 D-alanine + ATP = D-alanyl-D-alanine + ADP + phosphate + H(+). Its pathway is cell wall biogenesis; peptidoglycan biosynthesis. Its function is as follows. Cell wall formation. The polypeptide is D-alanine--D-alanine ligase (Clostridium novyi (strain NT)).